The sequence spans 125 residues: Large ribosomal subunit protein bL12 (125 aa).

It belongs to the bacterial ribosomal protein bL12 family. Homodimer. Part of the ribosomal stalk of the 50S ribosomal subunit. Forms a multimeric L10(L12)X complex, where L10 forms an elongated spine to which 2 to 4 L12 dimers bind in a sequential fashion. Binds GTP-bound translation factors.

In terms of biological role, forms part of the ribosomal stalk which helps the ribosome interact with GTP-bound translation factors. Is thus essential for accurate translation. This chain is Large ribosomal subunit protein bL12, found in Rickettsia felis (strain ATCC VR-1525 / URRWXCal2) (Rickettsia azadi).